The sequence spans 412 residues: Divalent metal cation transporter MntH (412 aa).

A run of 10 helical transmembrane segments spans residues 19–39 (LSLM…GNFA), 46–66 (AAYG…AMLI), 98–118 (WVQA…GAAI), 122–142 (LLLG…TFLI), 155–175 (MVIG…LVFS), 196–216 (AVLL…IYLH), 241–261 (IAMT…AAAF), 286–306 (AAAV…TVVG), 348–368 (VLVL…VPLL), and 392–412 (LIVV…MSGI).

This sequence belongs to the NRAMP family.

Its subcellular location is the cell inner membrane. H(+)-stimulated, divalent metal cation uptake system. The chain is Divalent metal cation transporter MntH from Pectobacterium carotovorum subsp. carotovorum (strain PC1).